The sequence spans 313 residues: Intelectin-1a (313 aa).

Residues 1-18 form the signal peptide; that stretch reads MTQLGFLLFIMVATRGCS. In terms of domain architecture, Fibrinogen C-terminal spans 32–251; it reads SFFSSLPRSC…NNERAASALC (220 aa). Cys41 and Cys70 form a disulfide bridge. Ca(2+) contacts are provided by His86, Glu87, Asn89, Gly92, Gly97, Asp98, and Asp133. 3 disulfides stabilise this stretch: Cys94/Cys280, Cys199/Cys259, and Cys251/Cys265. 4 residues coordinate Ca(2+): Asn260, Glu262, Glu274, and Asp282. Residues 262–263 and Glu274 contribute to the a carbohydrate site; that span reads EH. Ser298 carries GPI-anchor amidated serine lipidation. Positions 299–313 are excised as a propeptide; that stretch reads SSRKITEAAVLLFYR.

Monomer. May interact with LTF. In terms of tissue distribution, expressed in small intestinal Paneth cells in uninfected mice. Expression also detected in various other tissues including stomach, kidney, ovary and brain.

It localises to the cell membrane. The protein resides in the secreted. Functionally, lectin that specifically recognizes microbial carbohydrate chains in a calcium-dependent manner. Binds to microbial glycans that contain a terminal acyclic 1,2-diol moiety, including beta-linked D-galactofuranose (beta-Galf), D-phosphoglycerol-modified glycans, D-glycero-D-talo-oct-2-ulosonic acid (KO) and 3-deoxy-D-manno-oct-2-ulosonic acid (KDO). Binds to glycans from Gram-positive and Gram-negative bacteria, including K.pneumoniae, S.pneumoniae, Y.pestis, P.mirabilis and P.vulgaris. Does not bind mammalian glycans. Probably plays a role in the defense system against microorganisms. May function as adipokine that has no effect on basal glucose uptake but enhances insulin-stimulated glucose uptake in adipocytes. Increases AKT phosphorylation in the absence and presence of insulin. May interact with lactoferrin/LTF and increase its uptake, and may thereby play a role in iron absorption. The protein is Intelectin-1a (Itln1) of Mus musculus (Mouse).